The chain runs to 515 residues: FADH(2)-dependent monooxygenase TftD (515 aa).

100 to 104 lines the substrate pocket; sequence RLPDA. FAD contacts are provided by residues 151-153, 157-160, and T192; these read LNF and QTDR. 203–204 lines the substrate pocket; it reads GC. 457–460 is a binding site for FAD; sequence TMTR.

This sequence belongs to the FADH(2)-utilizing monooxygenase family. As to quaternary structure, homotetramer. The chlorophenol-4-monooxygenase is composed of an oxygenase component TftD and a reductase component TftC.

Its pathway is xenobiotic degradation. In terms of biological role, oxygenase component of a two-component system that degrades 2,4,5-trichlorophenol. Uses FADH(2) supplied by TftC to oxidize 2,4,5-trichlorophenol (2,4,5-TCP) to 2,5-dichloro-p-benzoquinone, which is chemically reduced to 2,5-dichloro-p-hydroquinone (2,5-DiCHQ). Then, TftD oxidizes the latter to 5-chloro-2-hydroxy-p-benzoquinone. The chain is FADH(2)-dependent monooxygenase TftD (tftD) from Burkholderia cepacia (Pseudomonas cepacia).